Here is a 950-residue protein sequence, read N- to C-terminus: Voltage-gated inwardly rectifying potassium channel KCNH6 (950 aa).

The Cytoplasmic portion of the chain corresponds to 1–261 (MPVRRGHVAP…YSPFKAVWDW (261 aa)). A PAS domain is found at 41–70 (IIYCNDGFCELFGYSRVEVMQRPCTCDFLT). The 53-residue stretch at 92-144 (CKVDILYYRKDASSFRCLVDVVPVKNEDGAVIMFILNFEDLAQLLAKSSSRSL) folds into the PAC domain. The tract at residues 154–174 (LGSEGSHSRPSGQGPGPGRGK) is disordered. Residues 262-282 (LILLLVIYTAVFTPYSAAFLL) form a helical membrane-spanning segment. The Extracellular segment spans residues 283–298 (SDQDESQRGTCGYTCS). The chain crosses the membrane as a helical span at residues 299–319 (PLTVVDLIVDIMFVVDIVINF). Residues 320 to 340 (RTTYVNTNDEVVSHPRRIAVH) lie on the Cytoplasmic side of the membrane. Residues 341-361 (YFKGWFLIDMVAAIPFDLLIF) traverse the membrane as a helical segment. At 362–370 (RTGSDETTT) the chain is on the extracellular side. The helical; Voltage-sensor transmembrane segment at 371–391 (LIGLLKTARLLRLVRVARKLD) threads the bilayer. Residues 392–398 (RYSEYGA) are Cytoplasmic-facing. Residues 399–419 (AVLFLLMCTFALIAHWLACIW) traverse the membrane as a helical segment. The Extracellular segment spans residues 420–463 (YAIGNVERPYLEPKIGWLDSLGAQLGKQYNGSDPASGPSVQDKY). The pore-forming intramembrane region spans 464 to 484 (VTALYFTFSSLTSVGFGNVSP). The short motif at 476-481 (SVGFGN) is the Selectivity filter element. Residues 485–490 (NTNSEK) are Extracellular-facing. Residues 491–511 (VFSICVMLIGSLMYASIFGNV) form a helical membrane-spanning segment. Topologically, residues 512 to 950 (SAIIQRLYSG…HGSDPGFTRS (439 aa)) are cytoplasmic. The segment at 594 to 694 (AFRGASKGCL…IHRADLLEVL (101 aa)) is cNMP-binding domain. Disordered regions lie at residues 719–750 (GGLQ…APSL) and 890–950 (VPSS…FTRS). Over residues 740 to 750 (NDSQSGAAPSL) the composition is skewed to polar residues. Positions 898–912 (PGGLLSPLASPLRPL) are enriched in low complexity.

It belongs to the potassium channel family. H (Eag) (TC 1.A.1.20) subfamily. Kv11.2/KCNH6 sub-subfamily. In terms of assembly, the potassium channel is probably composed of a homo- or heterotetrameric complex of pore-forming alpha subunits that can associate only within their subfamily. As to expression, highly expressed in celiac and superior mesenteric ganglia, but not detected in brain or in heart. Detected at low levels in retina. Also found in pituitary. Also found in the olfactory bulb (granular and mitral cell layers).

The protein localises to the cell membrane. It carries out the reaction K(+)(in) = K(+)(out). In terms of biological role, pore-forming (alpha) subunit of voltage-gated inwardly rectifying potassium channel. Characterized by unusual gating kinetics by producing relatively small outward currents during membrane depolarization and large inward currents during subsequent repolarization which reflect a rapid inactivation during depolarization and quick recovery from inactivation but slow deactivation (closing) during repolarization. Activates even more slowly than KCNH2. This is Voltage-gated inwardly rectifying potassium channel KCNH6 from Rattus norvegicus (Rat).